The chain runs to 414 residues: Mu-like prophage FluMu F protein (414 aa).

This sequence to phage Mu protein F.

Its function is as follows. Involved in virion morphogenesis. The polypeptide is Mu-like prophage FluMu F protein (Haemophilus influenzae (strain ATCC 51907 / DSM 11121 / KW20 / Rd)).